Here is an 84-residue protein sequence, read N- to C-terminus: Inactive transposase YbfQ (84 aa).

In Escherichia coli (strain K12), this protein is Inactive transposase YbfQ (ybfQ).